Here is a 677-residue protein sequence, read N- to C-terminus: Methionine--tRNA ligase (677 aa).

The short motif at 15 to 25 (PYANGSIHLGH) is the 'HIGH' region element. The Zn(2+) site is built by C146, C149, C159, and C162. The 'KMSKS' region motif lies at 333 to 337 (KMSKS). K336 contributes to the ATP binding site. The 102-residue stretch at 576–677 (DFAKIDLRVA…EGAKPGMRVK (102 aa)) folds into the tRNA-binding domain.

The protein belongs to the class-I aminoacyl-tRNA synthetase family. MetG type 1 subfamily. In terms of assembly, homodimer. It depends on Zn(2+) as a cofactor.

It localises to the cytoplasm. The enzyme catalyses tRNA(Met) + L-methionine + ATP = L-methionyl-tRNA(Met) + AMP + diphosphate. Its function is as follows. Is required not only for elongation of protein synthesis but also for the initiation of all mRNA translation through initiator tRNA(fMet) aminoacylation. This is Methionine--tRNA ligase from Aeromonas hydrophila subsp. hydrophila (strain ATCC 7966 / DSM 30187 / BCRC 13018 / CCUG 14551 / JCM 1027 / KCTC 2358 / NCIMB 9240 / NCTC 8049).